A 412-amino-acid chain; its full sequence is Sexual development regulator umv3 (412 aa).

The interval 1–197 (MSAQDDIDTG…PPLLSDLPRH (197 aa)) is disordered. Polar residues-rich tracts occupy residues 73–93 (RANT…SASS) and 149–170 (RQSA…PGST). Positions 171 to 181 (ENERVRMHDQR) are enriched in basic and acidic residues. The Velvet domain occupies 195–388 (PRHSTDNKTY…ARQGIQVPVR (194 aa)).

This sequence belongs to the velvet family. VelC subfamily.

It is found in the nucleus. Velvet-domain-containing protein not required for disease or sexual development on seedlings. This is Sexual development regulator umv3 from Mycosarcoma maydis (Corn smut fungus).